We begin with the raw amino-acid sequence, 310 residues long: Methionyl-tRNA formyltransferase (310 aa).

Residue 108-111 (SLLP) participates in (6S)-5,6,7,8-tetrahydrofolate binding.

It belongs to the Fmt family.

The catalysed reaction is L-methionyl-tRNA(fMet) + (6R)-10-formyltetrahydrofolate = N-formyl-L-methionyl-tRNA(fMet) + (6S)-5,6,7,8-tetrahydrofolate + H(+). In terms of biological role, attaches a formyl group to the free amino group of methionyl-tRNA(fMet). The formyl group appears to play a dual role in the initiator identity of N-formylmethionyl-tRNA by promoting its recognition by IF2 and preventing the misappropriation of this tRNA by the elongation apparatus. The polypeptide is Methionyl-tRNA formyltransferase (Fusobacterium nucleatum subsp. nucleatum (strain ATCC 25586 / DSM 15643 / BCRC 10681 / CIP 101130 / JCM 8532 / KCTC 2640 / LMG 13131 / VPI 4355)).